A 316-amino-acid chain; its full sequence is Acetyl-coenzyme A carboxylase carboxyl transferase subunit alpha (316 aa).

The CoA carboxyltransferase C-terminal domain occupies 24–291 (NIKDKADIVD…KEALIQQLNE (268 aa)).

Belongs to the AccA family. Acetyl-CoA carboxylase is a heterohexamer composed of biotin carboxyl carrier protein (AccB), biotin carboxylase (AccC) and two subunits each of ACCase subunit alpha (AccA) and ACCase subunit beta (AccD).

The protein resides in the cytoplasm. It carries out the reaction N(6)-carboxybiotinyl-L-lysyl-[protein] + acetyl-CoA = N(6)-biotinyl-L-lysyl-[protein] + malonyl-CoA. Its pathway is lipid metabolism; malonyl-CoA biosynthesis; malonyl-CoA from acetyl-CoA: step 1/1. In terms of biological role, component of the acetyl coenzyme A carboxylase (ACC) complex. First, biotin carboxylase catalyzes the carboxylation of biotin on its carrier protein (BCCP) and then the CO(2) group is transferred by the carboxyltransferase to acetyl-CoA to form malonyl-CoA. The polypeptide is Acetyl-coenzyme A carboxylase carboxyl transferase subunit alpha (Ruthia magnifica subsp. Calyptogena magnifica).